The primary structure comprises 534 residues: MENKRAIIAVVLSFIVLVGWGYLSEYMGWTPKSVPATEQKTAASAPAPSVVTSAPEAVTPAPAFSPSTGHEVTVTTPLYKAVLHSGGGVLRQFMLSRYHMGIDRDAAPVNLIESSAIRVAPLGLLVNGQPSWNTGQWAFEGGDLNLADGQTGTLRFVGSVDGLRVVRELEFHADSYLVTEKLHLAPEGDAPRTARVGFTLGTTSLTPGESQYNLTRVAWFADGSFSEKSSTGDLEKGVLIDGSIDWAGVMSNYFLAAVAPKDTRAVLKGKLEGGVYRVAVERPDQMVNPGNSDVIVCNYWFGPKERDLLNAAPNNLGKAIDLGWFGFIARPLVTLLDFFYKYVGNYGTAIILLTILIKLVFWPLSHKSYKSMEQMKKLQPMLAKVREKHADDREKMNEEMMRLYKTYKVNPAGGCLPMLVQIPVFFGLYQALLNAIELRHAPFIAHVPFTDIVWLADLSAKDPFYVTPLVMGATMFLQQKLTPPAGDPTQAKVMMFMPVVFTFLFLNFPSGLVVYWLCNNVLSIAQQWWILRKA.

The next 5 helical transmembrane spans lie at 7–27, 319–339, 342–362, 413–433, and 493–513; these read IIAV…SEYM, AIDL…LDFF, YVGN…LVFW, GGCL…QALL, and VMMF…SGLV.

Belongs to the OXA1/ALB3/YidC family. Type 1 subfamily. In terms of assembly, interacts with the Sec translocase complex via SecD. Specifically interacts with transmembrane segments of nascent integral membrane proteins during membrane integration.

It localises to the cell inner membrane. Its function is as follows. Required for the insertion and/or proper folding and/or complex formation of integral membrane proteins into the membrane. Involved in integration of membrane proteins that insert both dependently and independently of the Sec translocase complex, as well as at least some lipoproteins. Aids folding of multispanning membrane proteins. The sequence is that of Membrane protein insertase YidC from Nitratidesulfovibrio vulgaris (strain ATCC 29579 / DSM 644 / CCUG 34227 / NCIMB 8303 / VKM B-1760 / Hildenborough) (Desulfovibrio vulgaris).